The primary structure comprises 439 residues: Sex-determination protein fem-3 (439 aa).

Positions 21–45 (RRLKRKANDDDDDDETVRERVDDAE) are disordered.

In terms of assembly, component of a complex containing fem-1, fem-2 and fem-3. Interacts with fem-1 and fem-2 (via N-terminus). Part of a E3 ubiquitin-protein ligase complex, at least composed of cul-2, elc-1, tra-1, fem-1, fem-2 and fem-3; mediates the ubiquitination and subsequent proteasomal degradation of tra-1. Interacts with tra-1. Interacts with sel-10. Interacts with tra-2.

Required for male development. In XO (male) animals, fem-3 directs male differentiation in all tissues. In XX (hermaphrodite) animals, it specifies the first 80 or so germ cells to be sperm. Negatively regulates male development when bound to tra-2. Together with fem-2 associates with the CBC(fem-1) E3 ubiquitin-protein ligase complex which mediates the ubiquitination and subsequent proteasomal degradation of tra-1. The protein is Sex-determination protein fem-3 of Caenorhabditis remanei (Caenorhabditis vulgaris).